Reading from the N-terminus, the 530-residue chain is FSD1-like protein (530 aa).

Met-1 is subject to N-acetylmethionine. Residues 102 to 141 (KQEQARKSQELQSQISQCNNALENSEELLEFATRSLDIKE) are a coiled coil. The COS domain maps to 137–194 (LDIKEPEEFSKAARQIKDRVTMASAFRLSLKPKVSDNMTHLMVDFSQERQMLQTLKFL). One can recognise a Fibronectin type-III domain in the interval 196-300 (VPKAPEIDPV…DPVTLETKAL (105 aa)). The B30.2/SPRY domain occupies 300-506 (LNFNLDNSSS…LSTGMQVPSA (207 aa)). The interval 322-366 (WDPTGGKGQESKIKGKENKGRSGTPSPKRTSVGSRPPAVRGSRDR) is disordered. The segment covering 330-341 (QESKIKGKENKG) has biased composition (basic and acidic residues). The segment covering 342 to 354 (RSGTPSPKRTSVG) has biased composition (polar residues). 2 positions are modified to phosphoserine: Ser-520 and Ser-523.

The sequence is that of FSD1-like protein (FSD1L) from Homo sapiens (Human).